Reading from the N-terminus, the 149-residue chain is Calmodulin (149 aa).

At A2 the chain carries N-acetylalanine. EF-hand domains are found at residues 8-43 (EQIAEFKEAFSLFDKDGDGTITTKELGTVMRSLGQN), 44-79 (PTEAELQDMINEVDADGNGTIDFPEFLTMMARKMKD), 81-116 (DSEEEIREAFRVFDKDGNGFISAAELRHVMTNLGEK), and 117-149 (LTDEEVDEMIREADIDGDGQVNYEEFVTMMMSK). The Ca(2+) site is built by D21, D23, D25, T27, E32, D57, D59, N61, T63, E68, D94, D96, N98, and E105. N6,N6,N6-trimethyllysine is present on K116. Ca(2+) contacts are provided by D130, D132, D134, Q136, and E141.

Belongs to the calmodulin family.

Functionally, calmodulin mediates the control of a large number of enzymes, ion channels and other proteins by Ca(2+). Among the enzymes to be stimulated by the calmodulin-Ca(2+) complex are a number of protein kinases and phosphatases. This Lumbricus rubellus (Humus earthworm) protein is Calmodulin.